The following is a 151-amino-acid chain: Small ribosomal subunit protein uS15z (151 aa).

It belongs to the universal ribosomal protein uS15 family.

This is Small ribosomal subunit protein uS15z (RPS13A) from Arabidopsis thaliana (Mouse-ear cress).